A 1609-amino-acid polypeptide reads, in one-letter code: Transmembrane protein 131-like (1609 aa).

Residues 1 to 40 form the signal peptide; sequence MAGLRRPQPGCYCRTAAAVNLLLGVFQVLLPCCRPGGAQG. The Extracellular portion of the chain corresponds to 41–869; that stretch reads QAIEPLPNVV…VVPGPSWEES (829 aa). N-linked (GlcNAc...) asparagine glycosylation is found at asparagine 343, asparagine 439, asparagine 522, asparagine 593, asparagine 709, and asparagine 846. The required for Wnt-signaling inhibition and LRP6 degradation stretch occupies residues 696–916; that stretch reads DYGKVTSLIL…QNASSSSQQN (221 aa). Residues 870-890 form a helical membrane-spanning segment; the sequence is FWRLTVFFVSLSLLGVILIAF. Topologically, residues 891–1609 are cytoplasmic; the sequence is QQAQYILMEF…SRDSSYCGNV (719 aa). Disordered regions lie at residues 946–974, 991–1014, 1108–1144, 1159–1178, and 1304–1340; these read RGKN…YGHS, TAAA…SSLP, KTSK…NQQV, VDTK…EDMF, and SSSD…PMVD. The span at 952 to 961 shows a compositional bias: polar residues; it reads PVNTPQSRIQ. A compositionally biased stretch (low complexity) spans 991 to 1000; sequence TAAASSTSTT. At serine 1122 the chain carries Phosphoserine. Over residues 1304-1331 the composition is skewed to low complexity; the sequence is SSSDCGSSSGSVRASRGSWGSWSSTSSS.

This sequence belongs to the TMEM131 family. Expressed in thymocytes.

It localises to the cell membrane. Its subcellular location is the cytoplasm. The protein localises to the endoplasmic reticulum. Membrane-associated form that antagonizes canonical Wnt signaling by triggering lysosome-dependent degradation of Wnt-activated LRP6. Regulates thymocyte proliferation. This chain is Transmembrane protein 131-like, found in Homo sapiens (Human).